Consider the following 336-residue polypeptide: MEEGSMFRSLLAILQWWGFNVTVIIMNKWIFQKLDFKFPLSVSCVHFICSSIGAYIVIKVLKLKPLIVVDPEDRWRRIFPMSFVFCINIVLGNVSLRYIPVSFMQTIKSFTPATTVVLQWLVWRKYFDWRIWASLVPIVGGILLTSVTELSFNMFGFCAALFGCLATSTKTILAESLLHGYKFDSINTVYYMAPFATMILGIPALLLEGSGILSWFEAHPAPWSALIIILSSGVLAFCLNFSIFYVIHSTTAVTFNVAGNLKVAVAVMVSWLIFRNPISYMNAVGCGITLVGCTFYGYVRHMLSQQTPGTPRTPRTPRSKMELLPLVNNDKLEGKV.

9 consecutive transmembrane segments (helical) span residues 11 to 31 (LAIL…KWIF), 38 to 58 (FPLS…YIVI), 83 to 103 (FVFC…PVSF), 131 to 151 (IWAS…TELS), 154 to 174 (MFGF…TILA), 193 to 213 (APFA…SGIL), 227 to 247 (IIIL…FYVI), 254 to 274 (TFNV…WLIF), and 278 to 298 (ISYM…FYGY).

Belongs to the TPT transporter family. TPT (TC 2.A.7.9) subfamily.

The protein resides in the membrane. Its function is as follows. Nucleotide sugar transporter that specifically transports UDP-galactose. This is UDP-galactose transporter 1 from Arabidopsis thaliana (Mouse-ear cress).